A 94-amino-acid chain; its full sequence is Large ribosomal subunit protein bL25 (94 aa).

It belongs to the bacterial ribosomal protein bL25 family. In terms of assembly, part of the 50S ribosomal subunit; part of the 5S rRNA/L5/L18/L25 subcomplex. Contacts the 5S rRNA. Binds to the 5S rRNA independently of L5 and L18.

This is one of the proteins that binds to the 5S RNA in the ribosome where it forms part of the central protuberance. This is Large ribosomal subunit protein bL25 from Salmonella agona (strain SL483).